The primary structure comprises 367 residues: snRNA-activating protein complex subunit 1 (367 aa).

An SNAPC3-binding region spans residues 1–168 (MGTPPGLQTD…EEFKDPSDRV (168 aa)). An SNAPC4-binding region spans residues 164–268 (PSDRVMKLIT…AESLAKIKSK (105 aa)). Disordered stretches follow at residues 228–254 (KDRKNPSLKSKINDGEEKMEGNSQETE) and 278–367 (KSRR…KRKH). Residues 238 to 254 (KINDGEEKMEGNSQETE) are compositionally biased toward basic and acidic residues. A phosphoserine mark is found at serine 289 and serine 290. Over residues 292 to 301 (CDSASGQGQV) the composition is skewed to polar residues.

Part of the SNAPc complex composed of 5 subunits: SNAPC1, SNAPC2, SNAPC3, SNAPC4 and SNAPC5. SNAPC1 interacts with SNAPC3, SNAPC4 and TBP.

The protein resides in the nucleus. In terms of biological role, part of the SNAPc complex required for the transcription of both RNA polymerase II and III small-nuclear RNA genes. Binds to the proximal sequence element (PSE), a non-TATA-box basal promoter element common to these 2 types of genes. Recruits TBP and BRF2 to the U6 snRNA TATA box. In Macaca fascicularis (Crab-eating macaque), this protein is snRNA-activating protein complex subunit 1 (SNAPC1).